Consider the following 159-residue polypeptide: Histone H2A (159 aa).

The span at 1–10 (MDSTGTGAGG) shows a compositional bias: gly residues. 2 disordered regions span residues 1 to 31 (MDST…SVSR) and 133 to 159 (KTAE…PKKA). 2 stretches are compositionally biased toward basic residues: residues 11-29 (KGKK…KKSV) and 149-159 (PKKAAKSPKKA). 2 short sequence motifs (SPKK motif) span residues 148–151 (SPKK) and 155–158 (SPKK).

It belongs to the histone H2A family. In terms of assembly, the nucleosome is a histone octamer containing two molecules each of H2A, H2B, H3 and H4 assembled in one H3-H4 heterotetramer and two H2A-H2B heterodimers. The octamer wraps approximately 147 bp of DNA.

It is found in the nucleus. The protein resides in the chromosome. Core component of nucleosome. Nucleosomes wrap and compact DNA into chromatin, limiting DNA accessibility to the cellular machineries which require DNA as a template. Histones thereby play a central role in transcription regulation, DNA repair, DNA replication and chromosomal stability. DNA accessibility is regulated via a complex set of post-translational modifications of histones, also called histone code, and nucleosome remodeling. This chain is Histone H2A, found in Zea mays (Maize).